The primary structure comprises 491 residues: Trehalose-6-phosphate synthase (491 aa).

Residue R22 participates in D-glucose 6-phosphate binding. 42–43 (GG) serves as a coordination point for UDP-alpha-D-glucose. Positions 100 and 154 each coordinate D-glucose 6-phosphate. UDP-alpha-D-glucose is bound by residues R296 and K301. R334 is a D-glucose 6-phosphate binding site. UDP-alpha-D-glucose is bound at residue 399 to 403 (LVAKE).

It belongs to the glycosyltransferase 20 family. Homotetramer.

The catalysed reaction is ADP-alpha-D-glucose + D-glucose 6-phosphate = alpha,alpha-trehalose 6-phosphate + ADP + H(+). It catalyses the reaction CDP-alpha-D-glucose + D-glucose 6-phosphate = alpha,alpha-trehalose 6-phosphate + CDP + H(+). The enzyme catalyses GDP-alpha-D-glucose + D-glucose 6-phosphate = alpha,alpha-trehalose 6-phosphate + GDP + H(+). It carries out the reaction TDP-alpha-D-glucose + D-glucose 6-phosphate = 5-methyl-UDP + alpha,alpha-trehalose 6-phosphate + H(+). The catalysed reaction is D-glucose 6-phosphate + UDP-alpha-D-glucose = alpha,alpha-trehalose 6-phosphate + UDP + H(+). Its pathway is glycan biosynthesis; trehalose biosynthesis. Functionally, probably involved in the osmoprotection via the biosynthesis of trehalose and in the production of glycogen and alpha-glucan via the TreS-Pep2 branch involved in the biosynthesis of maltose-1-phosphate (M1P). Catalyzes the transfer of glucose from UDP-glucose (UDP-Glc) to D-glucose 6-phosphate (Glc-6-P) to form trehalose-6-phosphate. Probably also able to use ADP-Glc, CDP-Glc, GDP-Glc and TDP-Glc as glucosyl donors. The sequence is that of Trehalose-6-phosphate synthase from Mycolicibacterium vanbaalenii (strain DSM 7251 / JCM 13017 / BCRC 16820 / KCTC 9966 / NRRL B-24157 / PYR-1) (Mycobacterium vanbaalenii).